The primary structure comprises 70 residues: Large ribosomal subunit protein bL31 (70 aa).

Zn(2+) is bound by residues cysteine 16, cysteine 18, cysteine 37, and cysteine 40.

This sequence belongs to the bacterial ribosomal protein bL31 family. Type A subfamily. As to quaternary structure, part of the 50S ribosomal subunit. Zn(2+) serves as cofactor.

Functionally, binds the 23S rRNA. The protein is Large ribosomal subunit protein bL31 of Proteus mirabilis (strain HI4320).